Consider the following 643-residue polypeptide: Probable extracellular metalloproteinase 4 (643 aa).

The signal sequence occupies residues 1-18 (MHGLLLAGLLALPLNVFA). A propeptide spanning residues 19 to 254 (HPTESHSSGV…VHSVVDYVSA (236 aa)) is cleaved from the precursor. The interval 49-69 (SDAVPKQDGESFTTSSTGDDN) is disordered. Residues 58–69 (ESFTTSSTGDDN) are compositionally biased toward polar residues. N-linked (GlcNAc...) asparagine glycosylation is found at N271 and N420. A Zn(2+)-binding site is contributed by H437. E438 is an active-site residue. H441 is a Zn(2+) binding site. Residues N603 and N629 are each glycosylated (N-linked (GlcNAc...) asparagine).

This sequence belongs to the peptidase M36 family. Zn(2+) serves as cofactor.

Its subcellular location is the secreted. Secreted metalloproteinase probably acting as a virulence factor. The protein is Probable extracellular metalloproteinase 4 (MEP4) of Trichophyton verrucosum (strain HKI 0517).